The chain runs to 649 residues: tRNA-guanine(15) transglycosylase (649 aa).

Residue D88 is the Nucleophile of the active site. Substrate-binding residues include D123 and A194. Zn(2+) is bound by residues C280, C282, and C285. The PUA domain maps to 573–648 (KYRIVIDSSV…VAATLRGGLK (76 aa)).

This sequence belongs to the archaeosine tRNA-ribosyltransferase family. Zn(2+) serves as cofactor.

It catalyses the reaction guanosine(15) in tRNA + 7-cyano-7-deazaguanine = 7-cyano-7-carbaguanosine(15) in tRNA + guanine. It participates in tRNA modification; archaeosine-tRNA biosynthesis. Exchanges the guanine residue with 7-cyano-7-deazaguanine (preQ0) at position 15 in the dihydrouridine loop (D-loop) of archaeal tRNAs. This chain is tRNA-guanine(15) transglycosylase, found in Methanococcus maripaludis (strain C6 / ATCC BAA-1332).